A 96-amino-acid polypeptide reads, in one-letter code: UPF0235 protein YggU (96 aa).

It belongs to the UPF0235 family.

The polypeptide is UPF0235 protein YggU (Escherichia coli (strain K12 / MC4100 / BW2952)).